Reading from the N-terminus, the 356-residue chain is Tyrosinase P (356 aa).

A signal peptide spans 1–19 (MGFYRNLVLVAASCTQALG). An N-linked (GlcNAc...) asparagine glycan is attached at asparagine 81. Histidine 87 and histidine 96 together coordinate Cu cation. Residues asparagine 148 and asparagine 193 are each glycosylated (N-linked (GlcNAc...) asparagine). Histidine 203 serves as a coordination point for Cu cation. Asparagine 226 carries an N-linked (GlcNAc...) asparagine glycan. Cu cation-binding residues include histidine 263 and histidine 286. Asparagine 309 is a glycosylation site (N-linked (GlcNAc...) asparagine).

The protein belongs to the tyrosinase family. Cu(2+) is required as a cofactor. In terms of processing, glycosylated.

The protein localises to the endoplasmic reticulum lumen. It localises to the golgi apparatus lumen. The catalysed reaction is aspulvinone E + O2 = (5Z)-3-(3,4-dihydroxyphenyl)-5-[(3,4-dihydroxyphenyl)methylidene]-5-oxo-2,5-dihydrofuran-3-olate. The enzyme catalyses aspulvinone E + O2 = (2Z)-2-[(3,4-dioxocyclohexa-1,5-dien-1-yl)methylidene]-4-(4-hydroxyphenyl)-5-oxo-2,5-dihydrofuran-3-olate + H2O. Activity is inhibited by the presence of dithiothreitol (DTT). Its function is as follows. Tyrosinase; part of the gene cluster that mediates the biosynthesis of Asp-melanin, a pigment that confers resistance against UV light and hampers phagocytosis by soil amoeba. The nonribosomal peptide synthase melA converts 4-hydroxyphenylpyruvate (4-HPPA) to aspulvinone E. The tyrosinase tyrP then performs hydroxylations of both aromatic moieties of aspulvinone E. The product of tyrP is highly unstable, and, due to the high reactivity of methides and ortho-diquinones, the polymeric Asp-melanin forms spontaneously. The polypeptide is Tyrosinase P (tyrP) (Aspergillus terreus).